The chain runs to 323 residues: Olfactory receptor 5P58 (323 aa).

Topologically, residues 1–28 are extracellular; the sequence is MAFLEDGNHTAVTEFILVGLTDDPVLKV. Residue asparagine 8 is glycosylated (N-linked (GlcNAc...) asparagine). A helical membrane pass occupies residues 29–49; that stretch reads ILFTIILCIYLVTVSGNLSTI. Residues 50 to 57 lie on the Cytoplasmic side of the membrane; the sequence is LLIRVSSQ. A helical transmembrane segment spans residues 58–78; sequence LHHPMYFFLSHLASVDLGYSS. Residues 79–102 are Extracellular-facing; sequence SVTPNMLINFLAENNTISYIGCSI. Asparagine 92 carries an N-linked (GlcNAc...) asparagine glycan. A disulfide bond links cysteine 100 and cysteine 192. Residues 103–123 traverse the membrane as a helical segment; that stretch reads QFGSATFFGVLECFLLAVMAY. Topologically, residues 124–136 are cytoplasmic; sequence DRFVAICNPLLYS. A helical transmembrane segment spans residues 137-157; the sequence is IKMSTQVCVKLVVGSYIGSSL. Over 158 to 199 the chain is Extracellular; the sequence is NASFVTVSIFNLLFCGPNKINHFFCDFDPLIELSCSDVSVPV. A helical transmembrane segment spans residues 200–220; that stretch reads AVTSCSAGLITMITVFVIAVS. Topologically, residues 221–240 are cytoplasmic; that stretch reads YTYILITVLKMRSTEGRHKA. A helical transmembrane segment spans residues 241-261; that stretch reads FSTCTSHLTAVTLFYGTVTFI. Topologically, residues 262 to 274 are extracellular; it reads YVMPKSNYSTDQN. Asparagine 268 carries N-linked (GlcNAc...) asparagine glycosylation. A helical membrane pass occupies residues 275 to 295; the sequence is KVVSVFYMVVIPMLNPLIYSL. The Cytoplasmic portion of the chain corresponds to 296 to 323; the sequence is RNNEIKGALKRQLGKKIFSQSNILFCKS.

Belongs to the G-protein coupled receptor 1 family.

Its subcellular location is the cell membrane. Potential odorant receptor. The protein is Olfactory receptor 5P58 of Mus musculus (Mouse).